A 403-amino-acid polypeptide reads, in one-letter code: 1-deoxy-D-xylulose 5-phosphate reductoisomerase (403 aa).

Residues Thr18, Gly19, Ser20, Ile21, Gln46, and Asn132 each coordinate NADPH. Lys133 contacts 1-deoxy-D-xylulose 5-phosphate. Glu134 lines the NADPH pocket. Asp158 is a binding site for Mn(2+). 4 residues coordinate 1-deoxy-D-xylulose 5-phosphate: Ser159, Glu160, Ser189, and His212. Glu160 is a binding site for Mn(2+). An NADPH-binding site is contributed by Gly218. 1-deoxy-D-xylulose 5-phosphate-binding residues include Ser225, Asn230, Lys231, and Glu234. Glu234 lines the Mn(2+) pocket.

This sequence belongs to the DXR family. The cofactor is Mg(2+). It depends on Mn(2+) as a cofactor.

The catalysed reaction is 2-C-methyl-D-erythritol 4-phosphate + NADP(+) = 1-deoxy-D-xylulose 5-phosphate + NADPH + H(+). It functions in the pathway isoprenoid biosynthesis; isopentenyl diphosphate biosynthesis via DXP pathway; isopentenyl diphosphate from 1-deoxy-D-xylulose 5-phosphate: step 1/6. Functionally, catalyzes the NADPH-dependent rearrangement and reduction of 1-deoxy-D-xylulose-5-phosphate (DXP) to 2-C-methyl-D-erythritol 4-phosphate (MEP). This is 1-deoxy-D-xylulose 5-phosphate reductoisomerase from Aromatoleum aromaticum (strain DSM 19018 / LMG 30748 / EbN1) (Azoarcus sp. (strain EbN1)).